A 793-amino-acid polypeptide reads, in one-letter code: MKKLLIASLLFGTTTTVFAAPFVAKDIRVDGVQGDLEQQIRASLPVRAGQRVTDNDVANIVRSLFVSGRFDDVKAHQEGDVLVVSVVAKSIISDVKIKGNSVIPTEALKQNLDANGFKVGDVLIREKLNEFAKSVKEHYASVGRYNATVEPIVNTLPNNRAEILIQINEDDKAKLASLTFKGNESVSSSTLQEQMELQPDSWWKLWGNKFEGAQFEKDLQAIRDYYLNNGYAKAQITKTDVQLNDEKTKVNVTIDVNEGLQYDLRSARIIGNLGGMSAELEPLLSALHLNDTFRRSDIADVENAIKAKLGERGYGNTTVNSVPDFDDANKTLAITFVVDAGRRLTVRQLRFEGNTVSADSTLRQEMRQQEGTWYNSQLVELGKIRLDRTGFFETVENRIDPINGSNDEVDVVYKVKERNTGSINFGIGYGTESGISYQTSIKQDNFLGTGAAVSIAGTKNDYGTSVNLGYTEPYFTKDGVSLGGNIFFENYDNSKSDTSSNYKRTTYGSNVTLGFPVNENNSYYVGLGHTYNKISNFALEYNRNLYIQSMKFKGNGIKTNDFDFSFGWNYNSLNRGYFPTKGVKASLGGRVTIPGSDNKYYKLSADVQGFYPLDRDHRWVVSAKASAGYANGFGNKRLPFYQTYTAGGIGSLRGFAYGSIGPNAIYAEHGNGTFNKISSDVIGGNAITTASAELIVPTPFVSDKSQNTVRTSLFVDAASVWNTKWKSDKNGLESKVLKDLPDYGKSSRIRASTGVGFQWQSPIGPLVFSYAKPIKKYENDDVEQFQFSIGGSF.

Positions 1–19 are cleaved as a signal peptide; sequence MKKLLIASLLFGTTTTVFA. POTRA domains lie at 22–89, 90–170, 173–259, 262–341, and 344–418; these read FVAK…VVAK, SIIS…INED, AKLA…VNEG, YDLR…VDAG, and LTVR…VKER.

The protein belongs to the BamA family. Part of the Bam complex.

The protein localises to the cell outer membrane. Part of the outer membrane protein assembly complex, which is involved in assembly and insertion of beta-barrel proteins into the outer membrane. The sequence is that of Outer membrane protein assembly factor BamA from Haemophilus influenzae.